The chain runs to 488 residues: Fumarate hydratase (488 aa).

(S)-malate-binding residues include Ser105, Ser147, Asn148, Thr194, and His195. The Proton donor/acceptor role is filled by His195. Ser340 is a catalytic residue. Residues Ser341, Lys346, and Asn348 each coordinate (S)-malate.

The protein belongs to the class-II fumarase/aspartase family. Fumarase subfamily. Homotetramer.

It is found in the cytoplasm. The protein localises to the cytosol. It catalyses the reaction (S)-malate = fumarate + H2O. Functionally, catalyzes the reversible stereospecific interconversion of fumarate to L-malate. Fumarate metabolism in the cytosol plays a role during urea cycle and arginine metabolism; fumarate being a by-product of the urea cycle and amino-acid catabolism. This chain is Fumarate hydratase, found in Schistosoma mansoni (Blood fluke).